The following is a 96-amino-acid chain: UPF0235 protein YggU (96 aa).

It belongs to the UPF0235 family.

The sequence is that of UPF0235 protein YggU from Salmonella newport (strain SL254).